A 208-amino-acid chain; its full sequence is Troponin I, cardiac muscle (208 aa).

3 disordered regions span residues 1–37 (MAEE…KISA), 54–74 (DLER…GELC), and 168–208 (VRKD…GGQS). N-acetylalanine is present on Ala2. The segment at 28 to 73 (HAKRQSKISASRKLQLKTLLLQRAKRDLEREEQERAGEKQRHLGEL) is involved in binding TNC. 2 stretches are compositionally biased toward basic and acidic residues: residues 54–71 (DLER…RHLG) and 168–187 (VRKD…RKNV).

Belongs to the troponin I family. Binds to actin and tropomyosin.

Functionally, troponin I is the inhibitory subunit of troponin, the thin filament regulatory complex which confers calcium-sensitivity to striated muscle actomyosin ATPase activity. The sequence is that of Troponin I, cardiac muscle (TNNI3) from Coturnix japonica (Japanese quail).